Reading from the N-terminus, the 1017-residue chain is Anaphase-promoting complex subunit 5 (1017 aa).

TPR repeat units lie at residues 30-63 (KQSL…EKEL), 182-214 (DMSM…SPLD), 252-286 (VKRV…VNGQ), 337-370 (PYAV…AQER), and 508-541 (NNNN…WNDI). Positions 451 to 525 (INSNNYNSNN…NNNSSNSNNN (75 aa)) are enriched in low complexity. Disordered regions lie at residues 451–527 (INSN…NNGG) and 617–636 (NNNN…QQQN). 5 TPR repeats span residues 642-675 (LLSF…YKTQ), 756-790 (VICY…SRDF), 838-871 (ADSN…VLSD), 876-908 (SQLY…FLQL), and 931-964 (KEIY…LVPS).

Belongs to the APC5 family. The APC/C is composed of at least 13 subunits that stay tightly associated throughout the cell cycle: anapc1, anapc2, anapc3, anapc4, anapc5, anapc6, anapc7, anapc8, anapc10, anapc11, cdc20, cdc26 and cdh1.

It is found in the nucleus. It participates in protein modification; protein ubiquitination. Its function is as follows. Component of the anaphase promoting complex/cyclosome (APC/C), a cell cycle-regulated E3 ubiquitin-protein ligase complex that controls progression through mitosis and the G1 phase of the cell cycle. The polypeptide is Anaphase-promoting complex subunit 5 (anapc5) (Dictyostelium discoideum (Social amoeba)).